A 474-amino-acid polypeptide reads, in one-letter code: tRNA modification GTPase MnmE (474 aa).

Residues Arg28, Glu92, and Arg131 each coordinate (6S)-5-formyl-5,6,7,8-tetrahydrofolate. The 169-residue stretch at 227-395 (GIPVAIVGTT…LKGELTQIME (169 aa)) folds into the TrmE-type G domain. Asn237 is a K(+) binding site. GTP-binding positions include 237 to 242 (NVGKST), 256 to 262 (SDIHGTT), 281 to 284 (DTAG), and 376 to 378 (SAR). Ser241 contacts Mg(2+). K(+) is bound by residues Ser256, Ile258, and Thr261. Thr262 lines the Mg(2+) pocket. Residue Lys474 participates in (6S)-5-formyl-5,6,7,8-tetrahydrofolate binding.

The protein belongs to the TRAFAC class TrmE-Era-EngA-EngB-Septin-like GTPase superfamily. TrmE GTPase family. As to quaternary structure, homodimer. Heterotetramer of two MnmE and two MnmG subunits. K(+) serves as cofactor.

The protein resides in the cytoplasm. Its function is as follows. Exhibits a very high intrinsic GTPase hydrolysis rate. Involved in the addition of a carboxymethylaminomethyl (cmnm) group at the wobble position (U34) of certain tRNAs, forming tRNA-cmnm(5)s(2)U34. This is tRNA modification GTPase MnmE from Porphyromonas gingivalis (strain ATCC BAA-308 / W83).